A 397-amino-acid chain; its full sequence is Succinate--CoA ligase [ADP-forming] subunit beta (397 aa).

The ATP-grasp domain occupies 9–254 (KALLKGYGAP…ETEEDAKEIE (246 aa)). ATP is bound by residues lysine 46, 53–55 (GRG), glutamate 109, alanine 112, and glutamate 117. 2 residues coordinate Mg(2+): asparagine 209 and aspartate 223. Residues asparagine 274 and 331–333 (GIM) each bind substrate.

The protein belongs to the succinate/malate CoA ligase beta subunit family. In terms of assembly, heterotetramer of two alpha and two beta subunits. Mg(2+) serves as cofactor.

The enzyme catalyses succinate + ATP + CoA = succinyl-CoA + ADP + phosphate. It catalyses the reaction GTP + succinate + CoA = succinyl-CoA + GDP + phosphate. The protein operates within carbohydrate metabolism; tricarboxylic acid cycle; succinate from succinyl-CoA (ligase route): step 1/1. In terms of biological role, succinyl-CoA synthetase functions in the citric acid cycle (TCA), coupling the hydrolysis of succinyl-CoA to the synthesis of either ATP or GTP and thus represents the only step of substrate-level phosphorylation in the TCA. The beta subunit provides nucleotide specificity of the enzyme and binds the substrate succinate, while the binding sites for coenzyme A and phosphate are found in the alpha subunit. The polypeptide is Succinate--CoA ligase [ADP-forming] subunit beta (Rhizobium leguminosarum bv. trifolii (strain WSM2304)).